A 277-amino-acid chain; its full sequence is Caspase-3 (277 aa).

An N-acetylmethionine modification is found at Met1. 2 propeptides span residues 1 to 9 (MENNKTSVD) and 10 to 28 (SKSI…KSMD). Lys11 carries the N6-acetyllysine modification. Phosphoserine is present on Ser26. Catalysis depends on residues His121 and Cys163. An S-nitrosocysteine; in inhibited form modification is found at Cys163.

The protein belongs to the peptidase C14A family. Heterotetramer that consists of two anti-parallel arranged heterodimers, each one formed by a 17 kDa (p17) and a 12 kDa (p12) subunit. Interacts with BIRC6/bruce. In terms of assembly, (Microbial infection) Subunit p17 interacts with African swine fever virus (ASFV) inhibitor of apoptosis protein. In terms of processing, cleavage by granzyme B, caspase-6, caspase-8 and caspase-10 generates the two active subunits. Additional processing of the propeptides is likely due to the autocatalytic activity of the activated protease. Active heterodimers between the small subunit of caspase-7 protease and the large subunit of caspase-3 also occur and vice versa. Post-translationally, S-nitrosylated on its catalytic site cysteine in unstimulated cell lines and denitrosylated upon activation of the Fas apoptotic pathway, associated with an increase in intracellular caspase activity. Fas therefore activates caspase-3 not only by inducing the cleavage of the caspase zymogen to its active subunits, but also by stimulating the denitrosylation of its active site thiol. Ubiquitinated by BIRC6; this activity is inhibited by DIABLO/SMAC.

The protein localises to the cytoplasm. It carries out the reaction Strict requirement for an Asp residue at positions P1 and P4. It has a preferred cleavage sequence of Asp-Xaa-Xaa-Asp-|- with a hydrophobic amino-acid residue at P2 and a hydrophilic amino-acid residue at P3, although Val or Ala are also accepted at this position.. Inhibited by BIRC6; following inhibition of BIRC6-caspase binding by DIABLO/SMAC, BIRC6 is subjected to caspase cleavage, leading to an increase in active caspases. Functionally, involved in the activation cascade of caspases responsible for apoptosis execution. At the onset of apoptosis, it proteolytically cleaves poly(ADP-ribose) polymerase PARP1 at a '216-Asp-|-Gly-217' bond. Cleaves and activates sterol regulatory element binding proteins (SREBPs) between the basic helix-loop-helix leucine zipper domain and the membrane attachment domain. Cleaves and activates caspase-6, -7 and -9 (CASP6, CASP7 and CASP9, respectively). Cleaves and inactivates interleukin-18 (IL18). Triggers cell adhesion in sympathetic neurons through RET cleavage. Cleaves IL-1 beta between an Asp and an Ala, releasing the mature cytokine which is involved in a variety of inflammatory processes. Cleaves and inhibits serine/threonine-protein kinase AKT1 in response to oxidative stress. Acts as an inhibitor of type I interferon production during virus-induced apoptosis by mediating cleavage of antiviral proteins CGAS, IRF3 and MAVS, thereby preventing cytokine overproduction. Also involved in pyroptosis by mediating cleavage and activation of gasdermin-E (GSDME). Cleaves XRCC4 and phospholipid scramblase proteins XKR4, XKR8 and XKR9, leading to promote phosphatidylserine exposure on apoptotic cell surface. Cleaves BIRC6 following inhibition of BIRC6-caspase binding by DIABLO/SMAC. In Sus scrofa (Pig), this protein is Caspase-3 (CASP3).